The sequence spans 393 residues: Short-chain dehydrogenase/reductase family 42E member 1 (393 aa).

The active-site Proton acceptor is tyrosine 152. Position 156 (lysine 156) interacts with NAD(+). A run of 2 helical transmembrane segments spans residues 282–302 (LPLT…FILG) and 371–391 (GLLV…SVIL).

It belongs to the 3-beta-HSD family.

The protein localises to the membrane. This Homo sapiens (Human) protein is Short-chain dehydrogenase/reductase family 42E member 1 (SDR42E1).